A 216-amino-acid chain; its full sequence is Adenylate kinase (216 aa).

Position 10-15 (10-15 (GAGKGT)) interacts with ATP. Positions 30–59 (STGDMFRAAMKAETEMGLQAKSFIDKGALV) are NMP. Residues T31, R36, 57–59 (ALV), 85–88 (GFPR), and Q92 contribute to the AMP site. Residues 126 to 163 (GRRICKECGATYHLEFNPPAKADVCDKCGGELYQRSDD) form an LID region. R127 is a binding site for ATP. Zn(2+) contacts are provided by C130 and C133. An ATP-binding site is contributed by 136 to 137 (TY). The Zn(2+) site is built by C150 and C153. Residues R160 and R171 each coordinate AMP. An ATP-binding site is contributed by Q199.

This sequence belongs to the adenylate kinase family. Monomer.

The protein resides in the cytoplasm. The catalysed reaction is AMP + ATP = 2 ADP. Its pathway is purine metabolism; AMP biosynthesis via salvage pathway; AMP from ADP: step 1/1. Functionally, catalyzes the reversible transfer of the terminal phosphate group between ATP and AMP. Plays an important role in cellular energy homeostasis and in adenine nucleotide metabolism. The protein is Adenylate kinase of Bacillus cereus (strain ATCC 10987 / NRS 248).